Consider the following 59-residue polypeptide: MGKKKGKGAVELISLICEETGIRNYTTTKNRRNKQEKLELMKYCPKLRKHTLHKEGKIK.

Belongs to the bacterial ribosomal protein bL33 family.

This is Large ribosomal subunit protein bL33 from Borreliella afzelii (strain PKo) (Borrelia afzelii).